We begin with the raw amino-acid sequence, 772 residues long: Mitochondrial intermediate peptidase (772 aa).

The N-terminal 33 residues, 1 to 33 (MLARPSTTVLARRPFFRFRGCLNEPRPTKARCL), are a transit peptide targeting the mitochondrion. H556 is a Zn(2+) binding site. The active site involves E557. Positions 560 and 563 each coordinate Zn(2+).

Belongs to the peptidase M3 family. Zn(2+) is required as a cofactor.

It localises to the mitochondrion matrix. The catalysed reaction is Release of an N-terminal octapeptide as second stage of processing of some proteins imported into the mitochondrion.. In terms of biological role, cleaves proteins, imported into the mitochondrion, to their mature size. While most mitochondrial precursor proteins are processed to the mature form in one step by mitochondrial processing peptidase (MPP), the sequential cleavage by MIP of an octapeptide after initial processing by MPP is a required step for a subgroup of nuclear-encoded precursor proteins destined for the matrix or the inner membrane. The sequence is that of Mitochondrial intermediate peptidase (OCT1) from Coprinopsis scobicola (Ink cap fungus).